The sequence spans 35 residues: Trypsin inhibitor 1 (35 aa).

Disulfide bonds link Cys2–Cys19, Cys9–Cys23, and Cys18–Cys34.

Its function is as follows. Trypsin inhibitor. The chain is Trypsin inhibitor 1 from Spinacia oleracea (Spinach).